Here is a 287-residue protein sequence, read N- to C-terminus: Phosphatidylserine decarboxylase proenzyme (287 aa).

Residues Asp-90, His-147, and Ser-252 each act as charge relay system; for autoendoproteolytic cleavage activity in the active site. Ser-252 acts as the Schiff-base intermediate with substrate; via pyruvic acid; for decarboxylase activity in catalysis. A Pyruvic acid (Ser); by autocatalysis modification is found at Ser-252.

Belongs to the phosphatidylserine decarboxylase family. PSD-B subfamily. Prokaryotic type I sub-subfamily. As to quaternary structure, heterodimer of a large membrane-associated beta subunit and a small pyruvoyl-containing alpha subunit. Requires pyruvate as cofactor. Is synthesized initially as an inactive proenzyme. Formation of the active enzyme involves a self-maturation process in which the active site pyruvoyl group is generated from an internal serine residue via an autocatalytic post-translational modification. Two non-identical subunits are generated from the proenzyme in this reaction, and the pyruvate is formed at the N-terminus of the alpha chain, which is derived from the carboxyl end of the proenzyme. The autoendoproteolytic cleavage occurs by a canonical serine protease mechanism, in which the side chain hydroxyl group of the serine supplies its oxygen atom to form the C-terminus of the beta chain, while the remainder of the serine residue undergoes an oxidative deamination to produce ammonia and the pyruvoyl prosthetic group on the alpha chain. During this reaction, the Ser that is part of the protease active site of the proenzyme becomes the pyruvoyl prosthetic group, which constitutes an essential element of the active site of the mature decarboxylase.

Its subcellular location is the cell membrane. It catalyses the reaction a 1,2-diacyl-sn-glycero-3-phospho-L-serine + H(+) = a 1,2-diacyl-sn-glycero-3-phosphoethanolamine + CO2. It functions in the pathway phospholipid metabolism; phosphatidylethanolamine biosynthesis; phosphatidylethanolamine from CDP-diacylglycerol: step 2/2. Catalyzes the formation of phosphatidylethanolamine (PtdEtn) from phosphatidylserine (PtdSer). The chain is Phosphatidylserine decarboxylase proenzyme from Pseudomonas putida (strain GB-1).